Reading from the N-terminus, the 146-residue chain is Aminoglycoside N(6')-acetyltransferase type 1 (146 aa).

One can recognise an N-acetyltransferase domain in the interval 1 to 146; that stretch reads MNIMPISESQ…RVVYFKKNIG (146 aa). 4 residues coordinate substrate: Trp22, His25, Tyr66, and Glu79. 81-83 serves as a coordination point for acetyl-CoA; sequence IFV. Asp115 lines the substrate pocket. Position 120 (Asn120) interacts with acetyl-CoA. Glu136 contributes to the substrate binding site.

Homodimer.

It catalyses the reaction kanamycin B + acetyl-CoA = N(6')-acetylkanamycin B + CoA + H(+). Its function is as follows. Catalyzes the transfer of an acetyl group from acetyl-CoA to the 6'-amino group of aminoglycoside molecules conferring resistance to antibiotics containing the purpurosamine ring including amikacin, kanamycin, tobramycin and netilmicin. This chain is Aminoglycoside N(6')-acetyltransferase type 1, found in Acinetobacter baumannii.